Reading from the N-terminus, the 525-residue chain is UPF0288 protein MM_0912 (525 aa).

Belongs to the UPF0288 family.

This chain is UPF0288 protein MM_0912, found in Methanosarcina mazei (strain ATCC BAA-159 / DSM 3647 / Goe1 / Go1 / JCM 11833 / OCM 88) (Methanosarcina frisia).